Consider the following 446-residue polypeptide: Delta(8)-fatty-acid desaturase (446 aa).

The region spanning 5–89 (KKYISVGELE…LEDYLVSEIS (85 aa)) is the Cytochrome b5 heme-binding domain. 2 residues coordinate heme: histidine 40 and histidine 63. 2 helical membrane-spanning segments follow: residues 112 to 132 (VIYC…GVLC) and 136 to 156 (LWVH…AAYL). The Histidine box-1 signature appears at 158-162 (HDSGH). 4 consecutive transmembrane segments (helical) span residues 174–195 (FAQV…KWTH), 253–273 (IYLV…LLLF), 282–302 (ALNI…VSCL), and 309–329 (VLFV…FTLN). Residues 195–199 (HNAHH) carry the Histidine box-2 motif. Positions 372 to 376 (QLEHH) match the Histidine box-3 motif.

It belongs to the fatty acid desaturase type 1 family. Fe cation is required as a cofactor. Expressed only in young leaves.

Its subcellular location is the membrane. The enzyme catalyses an N-acyl-(4R)-4-hydroxysphinganine + 2 Fe(II)-[cytochrome b5] + O2 + 2 H(+) = a (4R,8E)-4-hydroxysphingenine ceramide + 2 Fe(III)-[cytochrome b5] + 2 H2O. The catalysed reaction is an N-acyl-(4R)-4-hydroxysphinganine + 2 Fe(II)-[cytochrome b5] + O2 + 2 H(+) = a (4R,8Z)-4-hydroxysphing-8-enine ceramide + 2 Fe(III)-[cytochrome b5] + 2 H2O. Functionally, plays a major role as delta(8)-fatty-acid desaturase which introduces a double bond at the 8-position in the long-chain base (LCB) of ceramides with or without a hydroxy group at the 4-position. The enzyme produces both the 8E and 8Z isomers (in a 4:1 ratio). This structural modification contributes to the quantitative partitioning of ceramides between the two major sphingolipid classes, glucosylceramides and glycosylinositolphosphoryl ceramides. Sphingolipids are important membrane components involved in environmental stress responses, such as resistance to chilling, and act as cell signaling molecules. This Borago officinalis (Bourrache) protein is Delta(8)-fatty-acid desaturase (sld1).